A 184-amino-acid chain; its full sequence is uncharacterized protein (184 aa).

The protein belongs to the eIF-2B alpha/beta/delta subunits family.

This is an uncharacterized protein from Rhodospirillum rubrum.